The sequence spans 238 residues: MTQTPVVSLHQVHQQFGSTTILSGLSLDIAPGEFVALLGRSGSGKTTLLRLLAGLDTPSQGHLRLPERRAVVFQEPRLLPWKNVWRNVVLGVKDRPTRDHAVEALREVELAHRADAWPLTLSGGEAQRAGLARALVRSPELLLLDEPFAALDALTRLRMQSLVARLWEVHRTAVLLVTHDVDEALLLADRVVVLEHGRIAAERTISIPRPRRPGDAAFASLRLELLGLLGVREALAAA.

In terms of domain architecture, ABC transporter spans 7–221 (VSLHQVHQQF…RPGDAAFASL (215 aa)). 39-46 (GRSGSGKT) contributes to the ATP binding site.

The protein belongs to the ABC transporter superfamily. Aliphatic sulfonates importer (TC 3.A.1.17.2) family. The complex is composed of two ATP-binding proteins (SsuB), two transmembrane proteins (SsuC) and a solute-binding protein (SsuA).

The protein resides in the cell inner membrane. The catalysed reaction is ATP + H2O + aliphatic sulfonate-[sulfonate-binding protein]Side 1 = ADP + phosphate + aliphatic sulfonateSide 2 + [sulfonate-binding protein]Side 1.. Its function is as follows. Part of the ABC transporter complex SsuABC involved in aliphatic sulfonates import. Responsible for energy coupling to the transport system. The protein is Aliphatic sulfonates import ATP-binding protein SsuB of Granulibacter bethesdensis (strain ATCC BAA-1260 / CGDNIH1).